Consider the following 546-residue polypeptide: Chaperonin GroEL (546 aa).

Residues 30-33 (TLGP), Lys-51, 87-91 (DGTTT), Gly-415, 479-481 (NAA), and Asp-495 contribute to the ATP site. The interval 526 to 546 (KKDEPAMPAGGGMGGMGGMDF) is disordered. Positions 534-546 (AGGGMGGMGGMDF) are enriched in gly residues.

This sequence belongs to the chaperonin (HSP60) family. Forms a cylinder of 14 subunits composed of two heptameric rings stacked back-to-back. Interacts with the co-chaperonin GroES.

The protein resides in the cytoplasm. The enzyme catalyses ATP + H2O + a folded polypeptide = ADP + phosphate + an unfolded polypeptide.. Functionally, together with its co-chaperonin GroES, plays an essential role in assisting protein folding. The GroEL-GroES system forms a nano-cage that allows encapsulation of the non-native substrate proteins and provides a physical environment optimized to promote and accelerate protein folding. This Xanthomonas campestris pv. campestris (strain 8004) protein is Chaperonin GroEL.